The primary structure comprises 221 residues: Interleukin-12 subunit alpha (221 aa).

Residues 1-25 form the signal peptide; it reads MCPLRSLLLISTLVLLHHLPHLSLG. Disulfide bonds link Cys39-Cys112, Cys66-Cys198, and Cys87-Cys125. N-linked (GlcNAc...) asparagine glycosylation is present at Asn95.

This sequence belongs to the IL-6 superfamily. As to quaternary structure, heterodimer with IL12B; disulfide-linked. This heterodimer is known as interleukin IL-12. Heterodimer with EBI3/IL27B; not disulfide-linked. This heterodimer is known as interleukin IL-35. Interacts with NBR1; this interaction promotes IL-12 secretion.

The protein resides in the secreted. In terms of biological role, heterodimerizes with IL12B to form the IL-12 cytokine or with EBI3/IL27B to form the IL-35 cytokine. IL-12 is primarily produced by professional antigen-presenting cells (APCs) such as B-cells and dendritic cells (DCs) as well as macrophages and granulocytes and regulates T-cell and natural killer-cell responses, induces the production of interferon-gamma (IFN-gamma), favors the differentiation of T-helper 1 (Th1) cells and is an important link between innate resistance and adaptive immunity. Mechanistically, exerts its biological effects through a receptor composed of IL12R1 and IL12R2 subunits. Binding to the receptor results in the rapid tyrosine phosphorylation of a number of cellular substrates including the JAK family kinases TYK2 and JAK2. In turn, recruited STAT4 gets phosphorylated and translocates to the nucleus where it regulates cytokine/growth factor responsive genes. As part of IL-35, plays essential roles in maintaining the immune homeostasis of the liver microenvironment and also functions as an immune-suppressive cytokine. Mediates biological events through unconventional receptors composed of IL12RB2 and gp130/IL6ST heterodimers or homodimers. Signaling requires the transcription factors STAT1 and STAT4, which form a unique heterodimer that binds to distinct DNA sites. In Ovis aries (Sheep), this protein is Interleukin-12 subunit alpha (IL12A).